Here is a 244-residue protein sequence, read N- to C-terminus: NAD(P)H-quinone oxidoreductase subunit K (244 aa).

[4Fe-4S] cluster is bound by residues Cys-60, Cys-61, Cys-125, and Cys-156. The disordered stretch occupies residues 213–244; sequence KSEKSIESSKLNPVEESSENIYETNSIDEVIK. A compositionally biased stretch (polar residues) spans 231–244; it reads ENIYETNSIDEVIK.

Belongs to the complex I 20 kDa subunit family. In terms of assembly, NDH-1 can be composed of about 15 different subunits; different subcomplexes with different compositions have been identified which probably have different functions. [4Fe-4S] cluster serves as cofactor.

Its subcellular location is the cellular thylakoid membrane. It carries out the reaction a plastoquinone + NADH + (n+1) H(+)(in) = a plastoquinol + NAD(+) + n H(+)(out). It catalyses the reaction a plastoquinone + NADPH + (n+1) H(+)(in) = a plastoquinol + NADP(+) + n H(+)(out). NDH-1 shuttles electrons from an unknown electron donor, via FMN and iron-sulfur (Fe-S) centers, to quinones in the respiratory and/or the photosynthetic chain. The immediate electron acceptor for the enzyme in this species is believed to be plastoquinone. Couples the redox reaction to proton translocation, and thus conserves the redox energy in a proton gradient. Cyanobacterial NDH-1 also plays a role in inorganic carbon-concentration. This is NAD(P)H-quinone oxidoreductase subunit K from Prochlorococcus marinus subsp. pastoris (strain CCMP1986 / NIES-2087 / MED4).